Here is a 1621-residue protein sequence, read N- to C-terminus: Nestin (1621 aa).

At Met-1 the chain carries N-acetylmethionine. The head stretch occupies residues 1–7; that stretch reads MEGCMGE. Residues 8-43 form a coil 1A region; it reads ESFQMWELNRRLEAYLARVKALEEQNELLSAELGGL. The IF rod domain maps to 8-313; sequence ESFQMWELNR…TLLEAENSRL (306 aa). Residues 44-55 form a linker 1 region; that stretch reads RAQSADTSWRAH. The segment at 56 to 151 is coil 1B; sequence ADDELAALRA…VAHEEERVGL (96 aa). The interval 152–173 is linker 12; that stretch reads NAQAACAPRCPAPPRGPPAPAP. Residues 174–192 form a coil 2A region; that stretch reads EVEELARRLGEAWRGAVRG. The segment at 193–195 is linker 2; that stretch reads YQE. Residues 196–313 form a coil 2B region; that stretch reads RVAHMETSLG…TLLEAENSRL (118 aa). Position 311 is a phosphoserine (Ser-311). Residues 314–1621 are tail; that stretch reads QTPGGGSKTS…DRESWSSGED (1308 aa). Thr-315 is subject to Phosphothreonine. Ser-325 carries the phosphoserine modification. Thr-338 is subject to Phosphothreonine. Residues Ser-355 and Ser-358 each carry the phosphoserine modification. Thr-388 bears the Phosphothreonine mark. 12 positions are modified to phosphoserine: Ser-398, Ser-471, Ser-476, Ser-548, Ser-564, Ser-578, Ser-588, Ser-638, Ser-680, Ser-702, Ser-746, and Ser-768. A disordered region spans residues 439-490; the sequence is SVLPGPEEPGGQRQEASTGQSPEDHASLAPPLSPDHSSLEAKDGESGGSRVF. The tract at residues 670 to 788 is disordered; that stretch reads LEKENQEPLR…PPEKVDLEPL (119 aa). 3 stretches are compositionally biased toward basic and acidic residues: residues 687–725, 736–770, and 779–788; these read EALR…LKTL, LETE…RSLG, and PPEKVDLEPL. Ser-790 carries the post-translational modification Phosphoserine. Lys-811 participates in a covalent cross-link: Glycyl lysine isopeptide (Lys-Gly) (interchain with G-Cter in SUMO1); alternate. Lys-811 is covalently cross-linked (Glycyl lysine isopeptide (Lys-Gly) (interchain with G-Cter in SUMO2); alternate). Phosphoserine is present on residues Ser-820, Ser-831, and Ser-842. Thr-851 carries the phosphothreonine modification. Phosphoserine occurs at positions 894, 905, 913, and 934. Positions 895 to 1593 are disordered; that stretch reads LGAWNLENLR…GSALKTSWAG (699 aa). Composition is skewed to basic and acidic residues over residues 904–936, 949–960, 980–994, and 1012–1024; these read RSPE…RSLE, QRWEDTVEKDQE, LNLR…KEEV, and GHPE…EQRG. Ser-1016 is modified (phosphoserine). The segment covering 1085–1098 has biased composition (low complexity); it reads GSEPAMGESAAGAE. Residues 1099–1110 show a composition bias toward gly residues; it reads PGPGQGVGGLGD. Composition is skewed to basic and acidic residues over residues 1129–1145 and 1159–1184; these read LEAK…KDLE and GKSR…RGAE. Ser-1261, Ser-1282, Ser-1286, Ser-1310, Ser-1347, Ser-1409, Ser-1418, and Ser-1452 each carry phosphoserine. Acidic residues predominate over residues 1275–1292; it reads PQEEGEESREESEEDELG. Acidic residues predominate over residues 1409 to 1428; the sequence is SDGFADEEESGEEGEEDQEE. 2 stretches are compositionally biased toward low complexity: residues 1440–1453 and 1460–1470; these read GSSV…SSSQ and SDSVSVSVPWD. The span at 1486–1495 shows a compositional bias: polar residues; it reads ETESQDSAEP. Phosphoserine is present on residues Ser-1496, Ser-1498, Ser-1577, Ser-1617, and Ser-1618.

It belongs to the intermediate filament family. Forms homodimers and homotetramers in vitro. In mixtures with other intermediate filament proteins such as vimentin and alpha-internexin, tis protein preferentially forms heterodimers which can assemble to form intermediate filaments if nestin does not exceed 25%. Interacts with FHOD3. In terms of processing, constitutively phosphorylated. This increases during mitosis when the cytoplasmic intermediate filament network is reorganized. CNS stem cells.

Required for brain and eye development. Promotes the disassembly of phosphorylated vimentin intermediate filaments (IF) during mitosis and may play a role in the trafficking and distribution of IF proteins and other cellular factors to daughter cells during progenitor cell division. Required for survival, renewal and mitogen-stimulated proliferation of neural progenitor cells. The sequence is that of Nestin (NES) from Homo sapiens (Human).